Consider the following 131-residue polypeptide: Serum amyloid A-3 protein (131 aa).

The first 18 residues, 1 to 18, serve as a signal peptide directing secretion; it reads MNLSTGIIFCFLILGVSS. Residues 94–105 show a composition bias toward basic and acidic residues; the sequence is MTRDQVREDSKA. The disordered stretch occupies residues 94-131; that stretch reads MTRDQVREDSKADQFANEWGRSGKDPNHFRPAGLPDKY.

The protein belongs to the SAA family. As to expression, expressed in the liver. Expressed in mammary epithelial cells. Expressed at high levels in mammary ductal cells and vesicle engorged alveoli, but absent from stromal and connective tissue and leukocytes. Secreted into colostrum and mastitic milk (at protein level). Low expression levels, if any, in normal milk (at protein level).

The protein localises to the secreted. Major acute phase reactant. Apolipoprotein of the HDL complex. May have a role in protection of the mammary gland during remodeling and infection. In vitro exhibits antimicrobial activity against Escherichia coli, Streptococcus uberis and Pseudomonas aeruginosa. The polypeptide is Serum amyloid A-3 protein (SAA3) (Bos taurus (Bovine)).